Reading from the N-terminus, the 473-residue chain is H(+)/Cl(-) exchange transporter ClcA (473 aa).

The Cytoplasmic segment spans residues 1-32 (MKTDNSTFLAQQIVRLRRRDQIRRLMQRDKTP). Residues 33-69 (LAILFMAAVVGTLTGLVGVAFEKAVSWVQNMRIGALV) form a helical membrane-spanning segment. Over 70 to 76 (QVADHAF) the chain is Periplasmic. A helical membrane pass occupies residues 77–100 (LLWPLAFILSALLAMVGYFLVRKF). The Selectivity filter part_1 signature appears at 106–110 (GSGIP). S107 is a binding site for chloride. Positions 109 to 116 (IPEIEGAL) form an intramembrane region, helical. Residues 117 to 123 (EELRPVR) are Cytoplasmic-facing. Helical transmembrane passes span 124-141 (WWRV…TLGA) and 148-166 (EGPT…LDVF). A Selectivity filter part_2 motif is present at residues 146-150 (GREGP). The Cytoplasmic segment spans residues 167-176 (RMRSAEARHT). Intramembrane regions (helical) lie at residues 177–189 (LLAT…LSAA) and 193–201 (PLAGILFII). Topologically, residues 202 to 214 (EEMRPQFRYNLIS) are cytoplasmic. A helical membrane pass occupies residues 215–232 (IKAVFTGVIMSSIVFRIF). The Periplasmic segment spans residues 233-252 (NGEAPIIEVGKLSDAPVNTL). Residues 253-281 (WLYLILGIIFGCVGPVFNSLVLRTQDMFQ) form a helical membrane-spanning segment. At 282 to 287 (RFHGGE) the chain is on the cytoplasmic side. The helical transmembrane segment at 288–309 (IKKWVLMGGAIGGLCGILGLIE) threads the bilayer. Residues 310–329 (PEAAGGGFNLIPIAAAGNFS) are Periplasmic-facing. A run of 2 helical transmembrane segments spans residues 330-349 (VGLL…LCFS) and 355-376 (GIFA…MAAA). Residues 355-359 (GIFAP) carry the Selectivity filter part_3 motif. Chloride is bound by residues I356 and F357. The Periplasmic segment spans residues 377 to 386 (VLFPQYHLEA). Positions 387-401 (GTFAIAGMGALMAAS) form an intramembrane region, helical. The segment at residues 402–404 (VRA) is an intramembrane region (note=Loop between two helices). Residues 405–416 (PLTGIVLVLEMT) constitute an intramembrane region (helical). The segment at residues 417–421 (DNYQL) is an intramembrane region (note=Loop between two helices). A helical membrane pass occupies residues 422-438 (ILPMIITCLGATLLAQF). Over 439 to 473 (LGGKPLYSTILARTLAKQDAEQAAKNQNAPAGENT) the chain is Cytoplasmic. Residue Y445 coordinates chloride.

The protein belongs to the chloride channel (TC 2.A.49) family. ClcA subfamily. As to quaternary structure, homodimer.

Its subcellular location is the cell inner membrane. The enzyme catalyses 2 chloride(in) + H(+)(out) = 2 chloride(out) + H(+)(in). In terms of biological role, proton-coupled chloride transporter. Functions as antiport system and exchanges two chloride ions for 1 proton. Probably acts as an electrical shunt for an outwardly-directed proton pump that is linked to amino acid decarboxylation, as part of the extreme acid resistance (XAR) response. The chain is H(+)/Cl(-) exchange transporter ClcA from Salmonella schwarzengrund (strain CVM19633).